Consider the following 85-residue polypeptide: Antitoxin VapB31 (85 aa).

Its function is as follows. Antitoxin component of a type II toxin-antitoxin (TA) system. Upon expression in M.smegmatis neutralizes the effect of cognate toxin VapC31. The sequence is that of Antitoxin VapB31 (vapB31) from Mycobacterium tuberculosis (strain ATCC 25618 / H37Rv).